We begin with the raw amino-acid sequence, 486 residues long: PTS system N-acetylmuramic acid-specific EIIBC component (486 aa).

One can recognise a PTS EIIB type-1 domain in the interval methionine 1–glycine 89. Cysteine 28 serves as the catalytic Phosphocysteine intermediate; for EIIB activity. The PTS EIIC type-1 domain maps to serine 127–serine 486. The next 10 helical transmembrane spans lie at phenylalanine 129–phenylalanine 149, leucine 170–glycine 190, alanine 196–asparagine 216, phenylalanine 230–isoleucine 250, methionine 268–methionine 288, alanine 312–valine 332, leucine 347–phenylalanine 367, glycine 381–proline 401, isoleucine 411–glycine 431, and isoleucine 453–leucine 473.

Its subcellular location is the cell inner membrane. The catalysed reaction is N-acetyl-beta-D-muramate(out) + N(pros)-phospho-L-histidyl-[protein] = N-acetyl-beta-D-muramate 6-phosphate(in) + L-histidyl-[protein]. In terms of biological role, the phosphoenolpyruvate-dependent sugar phosphotransferase system (sugar PTS), a major carbohydrate active transport system, catalyzes the phosphorylation of incoming sugar substrates concomitantly with their translocation across the cell membrane. This system is involved in N-acetylmuramic acid (MurNAc) transport, yielding cytoplasmic MurNAc-6-P. Is also able to take up anhydro-N-acetylmuramic acid (anhMurNAc), but cannot phosphorylate the carbon 6, probably because of the 1,6-anhydro ring. The polypeptide is PTS system N-acetylmuramic acid-specific EIIBC component (murP) (Vibrio vulnificus (strain YJ016)).